A 394-amino-acid chain; its full sequence is Actin-related protein 2 (394 aa).

Met-1 is subject to N-acetylmethionine. ATP-binding positions include 160-162 (GDG) and 214-218 (RMIKE). The residue at position 299 (Lys-299) is an N6-acetyllysine. ATP is bound at residue 305–310 (GGSTMY). Position 322 is an N6-acetyllysine (Lys-322).

This sequence belongs to the actin family. ARP2 subfamily. In terms of assembly, component of the Arp2/3 complex composed of ACTR2/ARP2, ACTR3/ARP3, ARPC1B/p41-ARC, ARPC2/p34-ARC, ARPC3/p21-ARC, ARPC4/p20-ARC and ARPC5/p16-ARC.

It localises to the cytoplasm. Its subcellular location is the cytoskeleton. The protein localises to the cell projection. It is found in the nucleus. Its function is as follows. ATP-binding component of the Arp2/3 complex, a multiprotein complex that mediates actin polymerization upon stimulation by nucleation-promoting factor (NPF). The Arp2/3 complex mediates the formation of branched actin networks in the cytoplasm, providing the force for cell motility. Seems to contact the pointed end of the daughter actin filament. In addition to its role in the cytoplasmic cytoskeleton, the Arp2/3 complex also promotes actin polymerization in the nucleus, thereby regulating gene transcription and repair of damaged DNA. The Arp2/3 complex promotes homologous recombination (HR) repair in response to DNA damage by promoting nuclear actin polymerization, leading to drive motility of double-strand breaks (DSBs). The polypeptide is Actin-related protein 2 (Actr2) (Rattus norvegicus (Rat)).